A 378-amino-acid polypeptide reads, in one-letter code: tRNA-specific 2-thiouridylase MnmA (378 aa).

ATP-binding positions include 9-16 (GVSGGVDS) and methionine 35. An interaction with target base in tRNA region spans residues 94 to 96 (NPD). The active-site Nucleophile is the cysteine 99. Cysteines 99 and 195 form a disulfide. Residue glycine 123 participates in ATP binding. Positions 145–147 (KDQ) are interaction with tRNA. Cysteine 195 functions as the Cysteine persulfide intermediate in the catalytic mechanism. Residues 307–308 (RY) are interaction with tRNA.

The protein belongs to the MnmA/TRMU family.

The protein localises to the cytoplasm. The catalysed reaction is S-sulfanyl-L-cysteinyl-[protein] + uridine(34) in tRNA + AH2 + ATP = 2-thiouridine(34) in tRNA + L-cysteinyl-[protein] + A + AMP + diphosphate + H(+). In terms of biological role, catalyzes the 2-thiolation of uridine at the wobble position (U34) of tRNA, leading to the formation of s(2)U34. This Xanthomonas oryzae pv. oryzae (strain PXO99A) protein is tRNA-specific 2-thiouridylase MnmA.